The following is a 441-amino-acid chain: Arginine biosynthesis bifunctional protein ArgJ, mitochondrial (441 aa).

Thr177, Lys204, Thr215, Glu301, Asn436, and Ser441 together coordinate substrate. The active-site Nucleophile is the Thr215.

The protein belongs to the ArgJ family. Heterodimer of an alpha and a beta chain. Post-translationally, the alpha and beta chains are autoproteolytically processed from a single precursor protein within the mitochondrion.

It localises to the mitochondrion matrix. The enzyme catalyses N(2)-acetyl-L-ornithine + L-glutamate = N-acetyl-L-glutamate + L-ornithine. It catalyses the reaction L-glutamate + acetyl-CoA = N-acetyl-L-glutamate + CoA + H(+). Its pathway is amino-acid biosynthesis; L-arginine biosynthesis; L-ornithine and N-acetyl-L-glutamate from L-glutamate and N(2)-acetyl-L-ornithine (cyclic): step 1/1. It functions in the pathway amino-acid biosynthesis; L-arginine biosynthesis; N(2)-acetyl-L-ornithine from L-glutamate: step 1/4. In terms of biological role, catalyzes two activities which are involved in the cyclic version of arginine biosynthesis: the synthesis of acetylglutamate from glutamate and acetyl-CoA, and of ornithine by transacetylation between acetylornithine and glutamate. The chain is Arginine biosynthesis bifunctional protein ArgJ, mitochondrial from Lachancea thermotolerans (strain ATCC 56472 / CBS 6340 / NRRL Y-8284) (Yeast).